A 539-amino-acid chain; its full sequence is GMP synthase [glutamine-hydrolyzing] (539 aa).

The Glutamine amidotransferase type-1 domain occupies 4–203 (KILILDFGSQ…VHDICGCKSD (200 aa)). C82 functions as the Nucleophile in the catalytic mechanism. Catalysis depends on residues H177 and E179. The region spanning 204–395 (WNMPDYIAEA…LGLPHDMVYR (192 aa)) is the GMPS ATP-PPase domain. ATP is bound at residue 231 to 237 (SGGVDSS).

In terms of assembly, homodimer.

The catalysed reaction is XMP + L-glutamine + ATP + H2O = GMP + L-glutamate + AMP + diphosphate + 2 H(+). It functions in the pathway purine metabolism; GMP biosynthesis; GMP from XMP (L-Gln route): step 1/1. Catalyzes the synthesis of GMP from XMP. The chain is GMP synthase [glutamine-hydrolyzing] from Herminiimonas arsenicoxydans.